The following is a 1602-amino-acid chain: Calmodulin-regulated spectrin-associated protein 1 (1602 aa).

Residues 216–331 (ESPAHQKVRY…FIAELFWWFE (116 aa)) enclose the Calponin-homology (CH) domain. Ser-217, Ser-371, Ser-375, Ser-416, and Ser-431 each carry phosphoserine. The disordered stretch occupies residues 426–471 (QKQQKSIQGEDIPDQRHRSNSLTRVDGQPRGAAIAWPEKKTRPASQ). A Phosphothreonine modification is found at Thr-512. Ser-563, Ser-575, and Ser-589 each carry phosphoserine. Residues 603 to 620 (AKEKQVITKEDERGEGRP) show a composition bias toward basic and acidic residues. A disordered region spans residues 603 to 637 (AKEKQVITKEDERGEGRPRSIVSRRPSEGPQPLVR). Residues Ser-629, Ser-722, Ser-728, Ser-738, and Ser-740 each carry the phosphoserine modification. A compositionally biased stretch (basic and acidic residues) spans 772 to 789 (KLQEDMKVKEHEDKDDAS). Disordered stretches follow at residues 772-808 (KLQE…VSMA) and 825-870 (LNSC…GKDP). Low complexity-rich tracts occupy residues 797-808 (STASQMSSVSMA) and 830-841 (TKSSTSSSQKTT). Basic and acidic residues predominate over residues 857-869 (QKREQSPSQHGKD). The segment at 871–892 (ASLLASELVQLHMQLEEKRRAI) is sufficient for interaction with SPTBN1. Coiled-coil stretches lie at residues 873–909 (LLAS…QRLK) and 1016–1048 (DVNE…QEQL). The segment at 903 to 922 (SARQRLKLGKAAFLHVVKKG) is sufficient for interaction with calmodulin. 3 disordered regions span residues 1075–1165 (FVEP…GKCL), 1206–1226 (KEVG…VEEP), and 1301–1448 (ARVR…DWET). Residue Ser-1080 is modified to Phosphoserine. Residues 1103-1114 (RPAELKVPKDRP) are compositionally biased toward basic and acidic residues. Over residues 1115–1127 (QGSSRSKTPTPSV) the composition is skewed to polar residues. A compositionally biased stretch (low complexity) spans 1206–1220 (KEVGSSSSDVSGKES). Positions 1291-1343 (LLKQQRKAEEARVRKQQLEAEVELKRDEARRKAEEDRVRKEEEKARRELIKQE) form a coiled coil. The span at 1301 to 1346 (ARVRKQQLEAEVELKRDEARRKAEEDRVRKEEEKARRELIKQEYLR) shows a compositional bias: basic and acidic residues. Positions 1361–1372 (PKSKPKKPRPKS) are enriched in basic residues. Over residues 1380 to 1392 (SDSGTKCSSTPDN) the composition is skewed to polar residues. A compositionally biased stretch (low complexity) spans 1393-1410 (LSRTQSGSSLSLASAATT). A phosphoserine mark is found at Ser-1398 and Ser-1427. In terms of domain architecture, CKK spans 1463 to 1597 (GPKLFKEPSS…QPKRPAVPKK (135 aa)). Phosphotyrosine is present on Tyr-1537.

Belongs to the CAMSAP1 family. Interacts with spectrin via SPTBN1; the interaction is direct. Interacts with calmodulin; calcium-dependent it prevents interaction with spectrin.

Its subcellular location is the cytoplasm. The protein resides in the cytoskeleton. Its function is as follows. Key microtubule-organizing protein that specifically binds the minus-end of non-centrosomal microtubules and regulates their dynamics and organization. Specifically recognizes growing microtubule minus-ends and stabilizes microtubules. Acts on free microtubule minus-ends that are not capped by microtubule-nucleating proteins or other factors and protects microtubule minus-ends from depolymerization. In contrast to CAMSAP2 and CAMSAP3, tracks along the growing tips of minus-end microtubules without significantly affecting the polymerization rate: binds at the very tip of the microtubules minus-end and acts as a minus-end tracking protein (-TIP) that dissociates from microtubules after allowing tubulin incorporation. Through interaction with spectrin may regulate neurite outgrowth. In Homo sapiens (Human), this protein is Calmodulin-regulated spectrin-associated protein 1 (CAMSAP1).